A 765-amino-acid polypeptide reads, in one-letter code: Probable dipeptidyl peptidase 4 (765 aa).

An N-terminal signal peptide occupies residues 1-14 (MKWSILLLVGCAAA). Residues Asn-35, Asn-78, Asn-101, Asn-110, Asn-169, Asn-218, Asn-465, and Asn-490 are each glycosylated (N-linked (GlcNAc...) asparagine). The active-site Charge relay system is Ser-613. Residue Asn-665 is glycosylated (N-linked (GlcNAc...) asparagine). Residues Asp-690 and His-725 each act as charge relay system in the active site.

It belongs to the peptidase S9B family.

It is found in the secreted. The enzyme catalyses Release of an N-terminal dipeptide, Xaa-Yaa-|-Zaa-, from a polypeptide, preferentially when Yaa is Pro, provided Zaa is neither Pro nor hydroxyproline.. In terms of biological role, extracellular dipeptidyl-peptidase which removes N-terminal dipeptides sequentially from polypeptides having unsubstituted N-termini provided that the penultimate residue is proline. This Neosartorya fischeri (strain ATCC 1020 / DSM 3700 / CBS 544.65 / FGSC A1164 / JCM 1740 / NRRL 181 / WB 181) (Aspergillus fischerianus) protein is Probable dipeptidyl peptidase 4 (dpp4).